A 639-amino-acid chain; its full sequence is Sodium-dependent phosphate transport protein 2A (639 aa).

Topologically, residues 1–103 (MISYGENLGG…LRRAGVTLLK (103 aa)) are cytoplasmic. Residues Ser-14 and Ser-34 each carry the phosphoserine modification. The helical transmembrane segment at 104–125 (VPLMLSFLYLFVCSLDVLSSAF) threads the bilayer. At 126-145 (QLAGGKVAGDIFKDNAILSN) the chain is on the extracellular side. A helical membrane pass occupies residues 146 to 163 (PVAGLVVGILVTVLVQSS). Residues 164 to 165 (ST) are Cytoplasmic-facing. A helical membrane pass occupies residues 166–185 (STSIVVSMVSSGLLEVSSAI). Over 186–347 (PIIMGSNIGT…HIFVDTGLPD (162 aa)) the chain is Extracellular. Disulfide bonds link Cys-225-Cys-522 and Cys-306-Cys-336. Residues Asn-298, Asn-323, and Asn-330 are each glycosylated (N-linked (GlcNAc...) asparagine). A helical membrane pass occupies residues 348–370 (LAVGLILLAGSLALLCTCLILLV). Over 371–412 (KMLNSLLKGQVAKVIQKVINTDFPTPFTWATGYFAMVVGASM) the chain is Cytoplasmic. The chain crosses the membrane as a helical span at residues 413-436 (TFVVQSSSVFTSAITPLIGLGVIS). The Extracellular segment spans residues 437–466 (IERAYPLTLGSNIGTTTTAILAALASPREK). Residues 467–487 (LSSAFQIALCHFFFNISGILL) traverse the membrane as a helical segment. The Cytoplasmic segment spans residues 488–513 (WYPVPCTRLPIRMAKALGKRTAKYRW). Phosphothreonine; by PKC is present on Thr-508. A helical membrane pass occupies residues 514 to 534 (FAVLYLLLCFLLLPSMVFGLS). The Extracellular portion of the chain corresponds to 535–539 (MAGWR). The helical transmembrane segment at 540-561 (AMVGVGAPFGALLAFVVLVSAL) threads the bilayer. Topologically, residues 562–639 (QHRSPGCLPK…MPHHHDATRL (78 aa)) are cytoplasmic. At Ser-607 the chain carries Phosphoserine. Thr-623 is modified (phosphothreonine). Ser-625 carries the post-translational modification Phosphoserine.

This sequence belongs to the SLC34A transporter family. As to quaternary structure, interacts via its C-terminal region with NHERF4. Interacts with NHERF1. Interacts with TMEM174; regulates SLC34A1 internalization by PTH and FGF23.

The protein resides in the apical cell membrane. The protein localises to the cell membrane. The enzyme catalyses 3 Na(+)(out) + phosphate(out) = 3 Na(+)(in) + phosphate(in). Functionally, involved in actively transporting phosphate into cells via Na(+) cotransport in the renal brush border membrane. The cotransport has a Na(+):Pi stoichiometry of 3:1 and is electrogenic. The sequence is that of Sodium-dependent phosphate transport protein 2A from Ovis aries (Sheep).